A 486-amino-acid polypeptide reads, in one-letter code: Glycogen synthase (486 aa).

An ADP-alpha-D-glucose-binding site is contributed by Lys-20.

This sequence belongs to the glycosyltransferase 1 family. Bacterial/plant glycogen synthase subfamily.

It catalyses the reaction [(1-&gt;4)-alpha-D-glucosyl](n) + ADP-alpha-D-glucose = [(1-&gt;4)-alpha-D-glucosyl](n+1) + ADP + H(+). It functions in the pathway glycan biosynthesis; glycogen biosynthesis. Functionally, synthesizes alpha-1,4-glucan chains using ADP-glucose. This chain is Glycogen synthase, found in Aeromonas hydrophila subsp. hydrophila (strain ATCC 7966 / DSM 30187 / BCRC 13018 / CCUG 14551 / JCM 1027 / KCTC 2358 / NCIMB 9240 / NCTC 8049).